Here is a 321-residue protein sequence, read N- to C-terminus: Serpentine receptor class delta-63 (321 aa).

A run of 7 helical transmembrane segments spans residues 14–34, 41–61, 83–103, 128–148, 190–208, 240–260, and 273–293; these read LVYMICLMLYITMYILIYNFT, VKYFLYPSCTAMLIAMTMAFA, YIGPTFCFYCYNLYTAFGIVV, LWTLVFMWHYLCPLIYLIVII, AAMSLSLISMYYPLIGTYW, NFQILLPMLRYIPLTAIYFMI, and TITVLGTIPCILDPLVQIYFI.

It belongs to the nematode receptor-like protein srd family.

The protein resides in the membrane. The sequence is that of Serpentine receptor class delta-63 (srd-63) from Caenorhabditis elegans.